The sequence spans 282 residues: Uridylate-specific endoribonuclease B (282 aa).

Residues 4–278 (GDRELSALIQ…IGTTYPVPVK (275 aa)) enclose the EndoU domain. Active-site residues include His-156, His-172, and Lys-218.

It belongs to the ENDOU family. As to quaternary structure, monomer. The cofactor is Mn(2+).

It carries out the reaction ribonucleotidyl-uridine-RNA = a 5'-end dephospho-uridine-RNA + a 3'-end 2',3'-cyclophospho-ribonucleotide-RNA. Its function is as follows. Endoribonuclease that cleaves single-stranded RNAs at 5' of uridylates and releases a product with a 2',3'-cyclic phosphate at the 3'-end. The UU and GU sites are more efficiently cleaved than CU and AU sites. In Danio rerio (Zebrafish), this protein is Uridylate-specific endoribonuclease B (endoub).